The sequence spans 470 residues: E3 ubiquitin-protein ligase TRAIP (470 aa).

The RING-type; atypical zinc-finger motif lies at 7 to 50 (CTICSDFFDHSRDVAAIHCGHTFHLQCLIQWFETAPSRTCPQCR). A coiled-coil region spans residues 76–277 (AEFLKNELDS…RKKLMILQGT (202 aa)). An interaction with CYLD region spans residues 211 to 470 (LKEARKATGE…QPKLDTFLCQ (260 aa)). The PIP-box motif lies at 461–470 (QPKLDTFLCQ).

This sequence belongs to the TRAIP family. In terms of assembly, interacts (via PIP-box) with PCNA. Binds TRAF1, TRAF2, TRAF3, TRAF5 and TRAF6 is part of the receptor-TRAF signaling complex. May interact with CYLD; the C-terminus interacts with CYLD, however the interaction was not detected with the full-length protein. Interacts with POLK and POLN. Interacts with UIMC1. Autoubiquitinated. Post-translationally, sumoylated; sumoylation is required for nuclear localization. Sumoylation increases protein stability, possibly by preventing ubiquitination. In terms of tissue distribution, detected in testis and thymus, and at lower levels in spleen.

The protein resides in the nucleus. Its subcellular location is the nucleoplasm. It localises to the nucleolus. The protein localises to the chromosome. It is found in the cytoplasm. The protein resides in the perinuclear region. The catalysed reaction is S-ubiquitinyl-[E2 ubiquitin-conjugating enzyme]-L-cysteine + [acceptor protein]-L-lysine = [E2 ubiquitin-conjugating enzyme]-L-cysteine + N(6)-ubiquitinyl-[acceptor protein]-L-lysine.. The protein operates within protein modification; protein ubiquitination. Functionally, E3 ubiquitin ligase required to protect genome stability in response to replication stress. Acts as a key regulator of interstrand cross-link repair, which takes place when both strands of duplex DNA are covalently tethered together, thereby blocking replication and transcription. During mitosis, controls the choice between the two pathways of replication-coupled interstrand-cross-link repair by mediating ubiquitination of MCM7 subunit of the CMG helicase complex. Short ubiquitin chains on MCM7 promote recruitment of DNA glycosylase NEIL3. If the interstrand cross-link cannot be cleaved by NEIL3, the ubiquitin chains continue to grow on MCM7, promoting the unloading of the CMG helicase complex by the VCP/p97 ATPase, enabling the Fanconi anemia DNA repair pathway. Only catalyzes ubiquitination of MCM7 when forks converge. Also involved in the repair of covalent DNA-protein cross-links (DPCs) during DNA synthesis: promotes ubiquitination of DPCs, leading to their degradation by the proteasome. Has also been proposed to play a role in promoting translesion synthesis by mediating the assembly of 'Lys-63'-linked poly-ubiquitin chains on the Y-family polymerase POLN in order to facilitate bypass of DNA lesions and preserve genomic integrity. The function in translesion synthesis is however controversial. Acts as a regulator of the spindle assembly checkpoint. Also acts as a negative regulator of innate immune signaling by inhibiting activation of NF-kappa-B mediated by TNF. Negatively regulates TLR3/4- and RIG-I-mediated IRF3 activation and subsequent IFNB1 production and cellular antiviral response by promoting 'Lys-48'-linked polyubiquitination of TNK1 leading to its proteasomal degradation. The protein is E3 ubiquitin-protein ligase TRAIP of Mus musculus (Mouse).